Reading from the N-terminus, the 876-residue chain is Alanine--tRNA ligase (876 aa).

Residues H565, H569, C667, and H671 each contribute to the Zn(2+) site.

The protein belongs to the class-II aminoacyl-tRNA synthetase family. It depends on Zn(2+) as a cofactor.

It is found in the cytoplasm. The enzyme catalyses tRNA(Ala) + L-alanine + ATP = L-alanyl-tRNA(Ala) + AMP + diphosphate. Catalyzes the attachment of alanine to tRNA(Ala) in a two-step reaction: alanine is first activated by ATP to form Ala-AMP and then transferred to the acceptor end of tRNA(Ala). Also edits incorrectly charged Ser-tRNA(Ala) and Gly-tRNA(Ala) via its editing domain. This is Alanine--tRNA ligase from Staphylococcus epidermidis (strain ATCC 35984 / DSM 28319 / BCRC 17069 / CCUG 31568 / BM 3577 / RP62A).